Here is a 390-residue protein sequence, read N- to C-terminus: Phosphopentomutase (390 aa).

Mn(2+) is bound by residues Asp-9, Asp-283, His-288, Asp-324, His-325, and His-336.

Belongs to the phosphopentomutase family. Mn(2+) serves as cofactor.

The protein localises to the cytoplasm. It catalyses the reaction 2-deoxy-alpha-D-ribose 1-phosphate = 2-deoxy-D-ribose 5-phosphate. The enzyme catalyses alpha-D-ribose 1-phosphate = D-ribose 5-phosphate. Its pathway is carbohydrate degradation; 2-deoxy-D-ribose 1-phosphate degradation; D-glyceraldehyde 3-phosphate and acetaldehyde from 2-deoxy-alpha-D-ribose 1-phosphate: step 1/2. Functionally, isomerase that catalyzes the conversion of deoxy-ribose 1-phosphate (dRib-1-P) and ribose 1-phosphate (Rib-1-P) to deoxy-ribose 5-phosphate (dRib-5-P) and ribose 5-phosphate (Rib-5-P), respectively. The sequence is that of Phosphopentomutase from Thermotoga maritima (strain ATCC 43589 / DSM 3109 / JCM 10099 / NBRC 100826 / MSB8).